The primary structure comprises 310 residues: UDP-N-acetylenolpyruvoylglucosamine reductase (310 aa).

Positions 34-213 constitute an FAD-binding PCMH-type domain; the sequence is RAGGNAEVLF…LRRMNEITSS (180 aa). Residue arginine 178 is part of the active site. The Proton donor role is filled by serine 227. Glutamate 297 is an active-site residue.

The protein belongs to the MurB family. Requires FAD as cofactor.

The protein resides in the cytoplasm. The catalysed reaction is UDP-N-acetyl-alpha-D-muramate + NADP(+) = UDP-N-acetyl-3-O-(1-carboxyvinyl)-alpha-D-glucosamine + NADPH + H(+). It participates in cell wall biogenesis; peptidoglycan biosynthesis. Cell wall formation. This Parvibaculum lavamentivorans (strain DS-1 / DSM 13023 / NCIMB 13966) protein is UDP-N-acetylenolpyruvoylglucosamine reductase.